A 205-amino-acid polypeptide reads, in one-letter code: Large ribosomal subunit protein uL4 (205 aa).

The disordered stretch occupies residues 43–95 (RSGNRAQKDRAEVKHSTKKPWRQKGTGRARAGMTSSPLWRGGGRAFPNSPEEN). The segment covering 48–57 (AQKDRAEVKH) has biased composition (basic and acidic residues). Residues 58-69 (STKKPWRQKGTG) show a composition bias toward basic residues.

It belongs to the universal ribosomal protein uL4 family. As to quaternary structure, part of the 50S ribosomal subunit.

In terms of biological role, one of the primary rRNA binding proteins, this protein initially binds near the 5'-end of the 23S rRNA. It is important during the early stages of 50S assembly. It makes multiple contacts with different domains of the 23S rRNA in the assembled 50S subunit and ribosome. Forms part of the polypeptide exit tunnel. The protein is Large ribosomal subunit protein uL4 of Bordetella bronchiseptica (strain ATCC BAA-588 / NCTC 13252 / RB50) (Alcaligenes bronchisepticus).